The following is a 246-amino-acid chain: tRNA pseudouridine synthase A (246 aa).

The active-site Nucleophile is aspartate 53. Position 111 (tyrosine 111) interacts with substrate.

The protein belongs to the tRNA pseudouridine synthase TruA family. Homodimer.

The catalysed reaction is uridine(38/39/40) in tRNA = pseudouridine(38/39/40) in tRNA. In terms of biological role, formation of pseudouridine at positions 38, 39 and 40 in the anticodon stem and loop of transfer RNAs. The sequence is that of tRNA pseudouridine synthase A from Lysinibacillus sphaericus (strain C3-41).